Reading from the N-terminus, the 300-residue chain is N-acetylmannosamine kinase (300 aa).

Residues 5–12 (ALDIGGTK) and 132–139 (GVGGGIVL) each bind ATP. 4 residues coordinate Zn(2+): histidine 156, cysteine 166, cysteine 168, and cysteine 173.

The protein belongs to the ROK (NagC/XylR) family. NanK subfamily. In terms of assembly, homodimer.

The enzyme catalyses an N-acyl-D-mannosamine + ATP = an N-acyl-D-mannosamine 6-phosphate + ADP + H(+). The protein operates within amino-sugar metabolism; N-acetylneuraminate degradation; D-fructose 6-phosphate from N-acetylneuraminate: step 2/5. In terms of biological role, catalyzes the phosphorylation of N-acetylmannosamine (ManNAc) to ManNAc-6-P. This is N-acetylmannosamine kinase from Haemophilus influenzae (strain PittGG).